The following is an 882-amino-acid chain: Translation initiation factor IF-2 (882 aa).

A disordered region spans residues 50 to 299 (SFKSANTTKP…KERPLPETLV (250 aa)). Composition is skewed to basic and acidic residues over residues 60-71 (STEKDSKNSSRK) and 84-96 (RRRDNKNDHDNRH). A compositionally biased stretch (basic residues) spans 97–108 (GNNKRRNNKFKK). Basic and acidic residues-rich tracts occupy residues 109–133 (QQNDRRAERNKPQTEAKSAARDLLN), 169–183 (KKVENTRKPKEEKLE), 232–242 (QKEETKPTRKK), and 250–263 (EVPDYERERSEHSD). Basic residues predominate over residues 264 to 277 (KARRRRNKKNKRIN). Over residues 278–294 (QSKEIKKQPTQRKERPL) the composition is skewed to basic and acidic residues. Positions 383 to 552 (KRPPVVTIMG…LLQADVMELK (170 aa)) constitute a tr-type G domain. Positions 392 to 399 (GHVDHGKT) are G1. 392–399 (GHVDHGKT) contributes to the GTP binding site. A G2 region spans residues 417–421 (GITQK). The interval 438–441 (DTPG) is G3. GTP is bound by residues 438 to 442 (DTPGH) and 492 to 495 (NKID). The tract at residues 492–495 (NKID) is G4. Residues 528-530 (SAK) are G5.

It belongs to the TRAFAC class translation factor GTPase superfamily. Classic translation factor GTPase family. IF-2 subfamily.

Its subcellular location is the cytoplasm. In terms of biological role, one of the essential components for the initiation of protein synthesis. Protects formylmethionyl-tRNA from spontaneous hydrolysis and promotes its binding to the 30S ribosomal subunits. Also involved in the hydrolysis of GTP during the formation of the 70S ribosomal complex. The sequence is that of Translation initiation factor IF-2 from Lactobacillus gasseri (strain ATCC 33323 / DSM 20243 / BCRC 14619 / CIP 102991 / JCM 1131 / KCTC 3163 / NCIMB 11718 / NCTC 13722 / AM63).